Reading from the N-terminus, the 218-residue chain is Cytidylate kinase (218 aa).

Residue 11–19 (GPGASGKGT) participates in ATP binding.

Belongs to the cytidylate kinase family. Type 1 subfamily.

It is found in the cytoplasm. The catalysed reaction is CMP + ATP = CDP + ADP. It catalyses the reaction dCMP + ATP = dCDP + ADP. The polypeptide is Cytidylate kinase (Neisseria gonorrhoeae (strain ATCC 700825 / FA 1090)).